Here is a 150-residue protein sequence, read N- to C-terminus: Large ribosomal subunit protein bL9 (150 aa).

This sequence belongs to the bacterial ribosomal protein bL9 family.

Its function is as follows. Binds to the 23S rRNA. This is Large ribosomal subunit protein bL9 from Streptococcus pyogenes serotype M6 (strain ATCC BAA-946 / MGAS10394).